The following is a 165-amino-acid chain: Anaphase-promoting complex subunit 11 (165 aa).

The RING-type; atypical zinc-finger motif lies at 52 to 95 (CPSCKFPGDQCPLVIGLCHHNFHDHCIYRWLDTPTSKGLCPMCR).

In terms of assembly, the APC/C is composed of at least 13 subunits that stay tightly associated throughout the cell cycle: APC1, APC2, APC4, APC5, APC9, APC11, CDC16, CDC23, CDC26, CDC27, DOC1, MND2 and SWM1.

Its pathway is protein modification; protein ubiquitination. Probably catalytic subunit of the anaphase promoting complex/cyclosome (APC/C), a cell cycle-regulated E3 ubiquitin-protein ligase complex that controls progression through mitosis and the G1 phase of the cell cycle. The APC/C is thought to confer substrate specificity and, in the presence of ubiquitin-conjugating E2 enzymes, it catalyzes the formation of protein-ubiquitin conjugates that are subsequently degraded by the 26S proteasome. In early mitosis, the APC/C is activated by CDC20 and targets securin PDS1, the B-type cyclin CLB5, and other anaphase inhibitory proteins for proteolysis, thereby triggering the separation of sister chromatids at the metaphase-to-anaphase transition. In late mitosis and in G1, degradation of CLB5 allows activation of the APC/C by CDH1, which is needed to destroy CDC20 and the B-type cyclin CLB2 to allow exit from mitosis and creating the low CDK state necessary for cytokinesis and for reforming prereplicative complexes in G1 prior to another round of replication. APC11 is required to recruit the ubiquitin-conjugating enzyme E2 to the APC/C. This chain is Anaphase-promoting complex subunit 11 (APC11), found in Saccharomyces cerevisiae (strain ATCC 204508 / S288c) (Baker's yeast).